Reading from the N-terminus, the 1183-residue chain is DNA-directed RNA polymerase subunit beta (1183 aa).

The protein belongs to the RNA polymerase beta chain family. The RNAP catalytic core consists of 2 alpha, 1 beta, 1 beta' and 1 omega subunit. When a sigma factor is associated with the core the holoenzyme is formed, which can initiate transcription.

The catalysed reaction is RNA(n) + a ribonucleoside 5'-triphosphate = RNA(n+1) + diphosphate. In terms of biological role, DNA-dependent RNA polymerase catalyzes the transcription of DNA into RNA using the four ribonucleoside triphosphates as substrates. This is DNA-directed RNA polymerase subunit beta from Staphylococcus aureus (strain Mu3 / ATCC 700698).